A 273-amino-acid polypeptide reads, in one-letter code: 2,3,4,5-tetrahydropyridine-2,6-dicarboxylate N-succinyltransferase (273 aa).

Substrate contacts are provided by R104 and D141.

The protein belongs to the transferase hexapeptide repeat family. In terms of assembly, homotrimer.

It localises to the cytoplasm. It carries out the reaction (S)-2,3,4,5-tetrahydrodipicolinate + succinyl-CoA + H2O = (S)-2-succinylamino-6-oxoheptanedioate + CoA. It participates in amino-acid biosynthesis; L-lysine biosynthesis via DAP pathway; LL-2,6-diaminopimelate from (S)-tetrahydrodipicolinate (succinylase route): step 1/3. The protein is 2,3,4,5-tetrahydropyridine-2,6-dicarboxylate N-succinyltransferase of Chromobacterium violaceum (strain ATCC 12472 / DSM 30191 / JCM 1249 / CCUG 213 / NBRC 12614 / NCIMB 9131 / NCTC 9757 / MK).